Reading from the N-terminus, the 431-residue chain is Phosphoribosylamine--glycine ligase (431 aa).

The ATP-grasp domain occupies 107–315 (RWLMEEYKIP…LVEIGEEIVD (209 aa)). Residue 134-193 (IDDFGRPVVVKPLGLTGGKGVKVVGYQLKDNEEAKAYAEELIKRDGKVLIEERTDGVEFT) participates in ATP binding. Mg(2+) contacts are provided by Gln273, Glu285, and Asn287. Mn(2+)-binding residues include Gln273, Glu285, and Asn287.

Belongs to the GARS family. Mg(2+) is required as a cofactor. The cofactor is Mn(2+).

The catalysed reaction is 5-phospho-beta-D-ribosylamine + glycine + ATP = N(1)-(5-phospho-beta-D-ribosyl)glycinamide + ADP + phosphate + H(+). It functions in the pathway purine metabolism; IMP biosynthesis via de novo pathway; N(1)-(5-phospho-D-ribosyl)glycinamide from 5-phospho-alpha-D-ribose 1-diphosphate: step 2/2. In Thermococcus kodakarensis (strain ATCC BAA-918 / JCM 12380 / KOD1) (Pyrococcus kodakaraensis (strain KOD1)), this protein is Phosphoribosylamine--glycine ligase.